A 101-amino-acid chain; its full sequence is Apolipoprotein C-II (101 aa).

The signal sequence occupies residues 1 to 26 (MGTRYFLALFLILLVLGFKVQGVAMA). A lipid binding region spans residues 66 to 74 (TMDEKIRDI). Residues 78-101 (STAAVTTYAGIFTDQLLSLLKGDQ) are lipoprotein lipase cofactor.

Belongs to the apolipoprotein C2 family. Proapolipoprotein C-II is synthesized as a sialic acid containing glycoprotein which is subsequently desialylated prior to its proteolytic processing. Post-translationally, proapolipoprotein C-II undergoes proteolytic cleavage of its N-terminal hexapeptide to generate apolipoprotein C-II. In bovine, proapolipoprotein C-II was found to be the minor form whereas apolipoprotein C-II was found to be the major form in plasma.

The protein resides in the secreted. Its function is as follows. Component of chylomicrons, very low-density lipoproteins (VLDL), low-density lipoproteins (LDL), and high-density lipoproteins (HDL) in plasma. Plays an important role in lipoprotein metabolism as an activator of lipoprotein lipase. Both proapolipoprotein C-II and apolipoprotein C-II can activate lipoprotein lipase. The sequence is that of Apolipoprotein C-II (APOC2) from Camelus dromedarius (Dromedary).